We begin with the raw amino-acid sequence, 131 residues long: Small ribosomal subunit protein uS11 (131 aa).

This sequence belongs to the universal ribosomal protein uS11 family. Part of the 30S ribosomal subunit.

Its function is as follows. Located on the platform of the 30S subunit. The sequence is that of Small ribosomal subunit protein uS11 from Methanospirillum hungatei JF-1 (strain ATCC 27890 / DSM 864 / NBRC 100397 / JF-1).